The primary structure comprises 444 residues: Probable D-serine dehydratase (444 aa).

N6-(pyridoxal phosphate)lysine is present on K118.

The protein belongs to the serine/threonine dehydratase family. DsdA subfamily. Pyridoxal 5'-phosphate is required as a cofactor.

The enzyme catalyses D-serine = pyruvate + NH4(+). The sequence is that of Probable D-serine dehydratase from Acinetobacter baumannii (strain AB0057).